The sequence spans 210 residues: Histidine biosynthesis bifunctional protein HisIE (210 aa).

Residues 1–106 are phosphoribosyl-AMP cyclohydrolase; sequence MTKYKIDFSK…SCFNTEVPFS (106 aa). The tract at residues 107–210 is phosphoribosyl-ATP pyrophosphohydrolase; the sequence is VQTLAQTVQD…KGERQNIEQW (104 aa).

It in the N-terminal section; belongs to the PRA-CH family. In the C-terminal section; belongs to the PRA-PH family.

The protein resides in the cytoplasm. The enzyme catalyses 1-(5-phospho-beta-D-ribosyl)-ATP + H2O = 1-(5-phospho-beta-D-ribosyl)-5'-AMP + diphosphate + H(+). It carries out the reaction 1-(5-phospho-beta-D-ribosyl)-5'-AMP + H2O = 1-(5-phospho-beta-D-ribosyl)-5-[(5-phospho-beta-D-ribosylamino)methylideneamino]imidazole-4-carboxamide. The protein operates within amino-acid biosynthesis; L-histidine biosynthesis; L-histidine from 5-phospho-alpha-D-ribose 1-diphosphate: step 2/9. It functions in the pathway amino-acid biosynthesis; L-histidine biosynthesis; L-histidine from 5-phospho-alpha-D-ribose 1-diphosphate: step 3/9. The sequence is that of Histidine biosynthesis bifunctional protein HisIE (hisI) from Staphylococcus aureus (strain Mu50 / ATCC 700699).